The sequence spans 501 residues: MVLGLLAFIWLMRAWRQSLKIWVDVPSIGKDGILGQWITALQWQQKARSLIQEGYEKHGHYAFKIATPSRWEIFICNEKMIKEYKNLMDDKFSANAVTADMFQTKWTAPGAAEGVHKIPIPLLAKALTWQRNRSSVTGDTYFKEFVTEFLHAWEVETKITSEGPYEFCCFETGTRIVAHLTAKSLVGHPLCRDPEIIDLFAGYGNAVPSSGFLIAMFPGILKPLVAKFCEAPKMSDRLDRIFLSEMKERQLQTGSDASDIMSWLWHWTQENEPGKYSEVDIVRSITSAVFGAIHTTTQVLVHCLFELATRPEYVEPLRQEVQQAVENHGGWEKEGIESMLKLDSFIKECQRFNPLDSGSLARCATNDFTFSNGLKVAKGTYVFAPNAPVLFDERFYPNPHQFDGYRFYRLGQQTGKPQGFRFVATNSNYLQFGDGRHTCPGRYMAADEIRLMLGHILLHYDITTKENEGRPKNWFFKKILFPDMKGVIVLKKRAEVRAVNK.

Residues 1 to 16 form a helical membrane-spanning segment; that stretch reads MVLGLLAFIWLMRAWR. An N-linked (GlcNAc...) asparagine glycan is attached at Asn132. Residue Cys439 coordinates heme.

This sequence belongs to the cytochrome P450 family. Heme serves as cofactor.

It localises to the membrane. The protein operates within secondary metabolite biosynthesis. Functionally, cytochrome P450 monooxygenase; part of the gene cluster that mediates the biosynthesis of the indole diterpenes janthitremanes such as shearinine K or shearinine A. The geranylgeranyl diphosphate (GGPP) synthase janG catalyzes the first step in janthitremane biosynthesis via conversion of farnesyl pyrophosphate and isopentyl pyrophosphate into geranylgeranyl pyrophosphate (GGPP). Condensation of indole-3-glycerol phosphate with GGPP by the prenyl transferase janC then forms 3-geranylgeranylindole (3-GGI). Epoxidation by the FAD-dependent monooxygenase janM leads to a epoxidized-GGI that is substrate of the terpene cyclase janB for cyclization to yield paspaline. Paspaline is subsequently converted to 13-desoxypaspaline by the cytochrome P450 monooxygenase janP, via beta-PC-M6 in a series of alpha-face oxidations. The cytochrome P450 monooxygenase janQ is proposed to carry out sequential beta-face oxidation steps at C-7 and C-13 of 13-desoxypaspaline to form paspalicine and paspalinine respectively. The indole diterpene prenyltransferase janD may then convert paspalinine into shearinine K which is substrate of janO and/or additional enzymes for oxidation and cyclization to generate shearinine A. In Penicillium janthinellum (Penicillium vitale), this protein is Cytochrome P450 monooxygenase janQ.